The chain runs to 120 residues: Late cornified envelope-like proline-rich protein 1 (120 aa).

Belongs to the cornifin (SPRR) family.

This Mus musculus (Mouse) protein is Late cornified envelope-like proline-rich protein 1 (Lelp1).